The chain runs to 357 residues: Alanine racemase (357 aa).

Catalysis depends on Lys-35, which acts as the Proton acceptor; specific for D-alanine. At Lys-35 the chain carries N6-(pyridoxal phosphate)lysine. A substrate-binding site is contributed by Arg-131. The active-site Proton acceptor; specific for L-alanine is the Tyr-256. Residue Met-304 coordinates substrate.

It belongs to the alanine racemase family. Pyridoxal 5'-phosphate serves as cofactor.

The catalysed reaction is L-alanine = D-alanine. Its pathway is amino-acid biosynthesis; D-alanine biosynthesis; D-alanine from L-alanine: step 1/1. In terms of biological role, catalyzes the interconversion of L-alanine and D-alanine. May also act on other amino acids. This chain is Alanine racemase (alr), found in Legionella pneumophila (strain Paris).